Reading from the N-terminus, the 241-residue chain is Agamous-like MADS-box protein AGL8 homolog (241 aa).

The MADS-box domain occupies 3 to 57 (RGRVQLKRIENKINRQVTFSKRRSGLLKKAHEISVLCDAEVALVIFSSKGKLFEY). The K-box domain occupies 88 to 178 (SENWVLEHAK…LKKIKEREKN (91 aa)).

Its subcellular location is the nucleus. In terms of biological role, probable transcription factor. This Sinapis alba (White mustard) protein is Agamous-like MADS-box protein AGL8 homolog (AGL8).